Consider the following 244-residue polypeptide: Krueppel-like factor 9 (244 aa).

Disordered regions lie at residues 24–51 and 80–142; these read VPEHGGAPDAERLRLPEREVTKEHGDPG and SVCS…SEKR. Positions 32–51 are enriched in basic and acidic residues; it reads DAERLRLPEREVTKEHGDPG. The residue at position 122 (S122) is a Phosphoserine. C2H2-type zinc fingers lie at residues 143 to 167, 173 to 197, and 203 to 225; these read HKCPYSGCGKVYGKSSHLKAHYRVH, FPCTWPDCLKKFSRSDELTRHYRTH, and FRCPLCEKRFMRSDHLTKHARRH.

The protein belongs to the Sp1 C2H2-type zinc-finger protein family. Interacts with ZZEF1.

It localises to the nucleus. Its function is as follows. Transcription factor that binds to GC box promoter elements. Selectively activates mRNA synthesis from genes containing tandem repeats of GC boxes but represses genes with a single GC box. Acts as an epidermal circadian transcription factor regulating keratinocyte proliferation. In Sus scrofa (Pig), this protein is Krueppel-like factor 9 (KLF9).